A 153-amino-acid chain; its full sequence is LOB domain-containing protein 26 (153 aa).

An LOB domain is found at 4-105; that stretch reads NPCEVCRFQN…EEVSKTKKLL (102 aa). Residues 126–153 form a disordered region; the sequence is KSKPSVLRKRKRKTKSSDESAIRVVEDS. A compositionally biased stretch (basic and acidic residues) spans 140–153; sequence KSSDESAIRVVEDS.

Belongs to the LOB domain-containing protein family.

The protein is LOB domain-containing protein 26 (LBD26) of Arabidopsis thaliana (Mouse-ear cress).